Consider the following 323-residue polypeptide: Probable cell division protein WhiA (323 aa).

The H-T-H motif DNA-binding region spans 275–309; sequence TLKELGEMLTTGQVSKSGINHRLRKLDQIAERLRS.

It belongs to the WhiA family.

In terms of biological role, involved in cell division and chromosome segregation. The sequence is that of Probable cell division protein WhiA from Listeria monocytogenes serotype 4a (strain HCC23).